The sequence spans 835 residues: Leucine--tRNA ligase (835 aa).

Residues 36–46 (PYPSGKIHVGH) carry the 'HIGH' region motif. Residues 602 to 606 (KMSKS) carry the 'KMSKS' region motif. Position 605 (lysine 605) interacts with ATP.

The protein belongs to the class-I aminoacyl-tRNA synthetase family.

Its subcellular location is the cytoplasm. It catalyses the reaction tRNA(Leu) + L-leucine + ATP = L-leucyl-tRNA(Leu) + AMP + diphosphate. The chain is Leucine--tRNA ligase from Rickettsia massiliae (strain Mtu5).